The following is a 236-amino-acid chain: Large ribosomal subunit protein uL3 (236 aa).

Residues 215–236 are disordered; the sequence is PAPEPAAPVAAAAAGTGEEASA. Over residues 221 to 236 the composition is skewed to low complexity; sequence APVAAAAAGTGEEASA.

It belongs to the universal ribosomal protein uL3 family. In terms of assembly, part of the 50S ribosomal subunit. Forms a cluster with proteins L14 and L19.

Its function is as follows. One of the primary rRNA binding proteins, it binds directly near the 3'-end of the 23S rRNA, where it nucleates assembly of the 50S subunit. This is Large ribosomal subunit protein uL3 from Parafrankia sp. (strain EAN1pec).